The primary structure comprises 189 residues: dCTP deaminase (189 aa).

Residues 112–117 (KSTYAR), 136–138 (TLE), Q157, Y171, and Q181 contribute to the dCTP site. E138 (proton donor/acceptor) is an active-site residue.

The protein belongs to the dCTP deaminase family. In terms of assembly, homotrimer.

It catalyses the reaction dCTP + H2O + H(+) = dUTP + NH4(+). It participates in pyrimidine metabolism; dUMP biosynthesis; dUMP from dCTP (dUTP route): step 1/2. In terms of biological role, catalyzes the deamination of dCTP to dUTP. This is dCTP deaminase from Xanthomonas axonopodis pv. citri (strain 306).